A 759-amino-acid chain; its full sequence is Xaa-Pro dipeptidyl-peptidase (759 aa).

Active-site charge relay system residues include S347, D467, and H497.

Belongs to the peptidase S15 family. Homodimer.

It localises to the cytoplasm. It catalyses the reaction Hydrolyzes Xaa-Pro-|- bonds to release unblocked, N-terminal dipeptides from substrates including Ala-Pro-|-p-nitroanilide and (sequentially) Tyr-Pro-|-Phe-Pro-|-Gly-Pro-|-Ile.. Functionally, removes N-terminal dipeptides sequentially from polypeptides having unsubstituted N-termini provided that the penultimate residue is proline. The protein is Xaa-Pro dipeptidyl-peptidase of Streptococcus gordonii (strain Challis / ATCC 35105 / BCRC 15272 / CH1 / DL1 / V288).